Here is a 385-residue protein sequence, read N- to C-terminus: Trehalose-phosphate phosphatase A (385 aa).

The tract at residues 1-21 is disordered; it reads MDMKSGHSSPVMTDSPPISNS.

This sequence belongs to the trehalose phosphatase family. It depends on a divalent metal cation as a cofactor. In terms of tissue distribution, expressed in flowers.

It catalyses the reaction alpha,alpha-trehalose 6-phosphate + H2O = alpha,alpha-trehalose + phosphate. It functions in the pathway glycan biosynthesis; trehalose biosynthesis. Removes the phosphate from trehalose 6-phosphate to produce free trehalose. Trehalose accumulation in plant may improve abiotic stress tolerance. This Arabidopsis thaliana (Mouse-ear cress) protein is Trehalose-phosphate phosphatase A (TPPA).